The chain runs to 351 residues: Phosphate acyltransferase (351 aa).

This sequence belongs to the PlsX family. As to quaternary structure, homodimer. Probably interacts with PlsY.

Its subcellular location is the cytoplasm. The enzyme catalyses a fatty acyl-[ACP] + phosphate = an acyl phosphate + holo-[ACP]. Its pathway is lipid metabolism; phospholipid metabolism. Catalyzes the reversible formation of acyl-phosphate (acyl-PO(4)) from acyl-[acyl-carrier-protein] (acyl-ACP). This enzyme utilizes acyl-ACP as fatty acyl donor, but not acyl-CoA. This chain is Phosphate acyltransferase, found in Paramagnetospirillum magneticum (strain ATCC 700264 / AMB-1) (Magnetospirillum magneticum).